The chain runs to 737 residues: MADTQYILPNDIGVSSLDCREAFRLLSPTERLYAYHLSRAAWYGGLAVLLQTSPEAPYIYALLSRLFRAQDPDQLRQHALAEGLTEEEYQAFLVYAAGVYSNMGNYKSFGDTKFVPNLPKEKLERVILGSEAAQQHPEEVRGLWQTCGELMFSLEPRLRHLGLGKEGITTYFSGNCTMEDAKLAQDFLDSQNLSAYNTRLFKEVDGEGKPYYEVRLASVLGSEPSLDSEVTSKLKSYEFRGSPFQVTRGDYAPILQKVVEQLEKAKAYAANSHQGQMLAQYIESFTQGSIEAHKRGSRFWIQDKGPIVESYIGFIESYRDPFGSRGEFEGFVAVVNKAMSAKFERLVASAEQLLKELPWPPTFEKDKFLTPDFTSLDVLTFAGSGIPAGINIPNYDDLRQTEGFKNVSLGNVLAVAYATQREKLTFLEEDDKDLYILWKGPSFDVQVGLHELLGHGSGKLFVQDEKGAFNFDQETVINPETGEQIQSWYRSGETWDSKFSTIASSYEECRAESVGLYLCLHPQVLEIFGFEGADAEDVIYVNWLNMVRAGLLALEFYTPEAFNWRQAHMQARFVILRVLLEAGEGLVTITPTTGSDGRPDARVRLDRSKIRSVGKPALERFLRRLQVLKSTGDVAGGRALYEGYATVTDAPPECFLTLRDTVLLRKESRKLIVQPNTRLEGSDVQLLEYEASAAGLIRSFSERFPEDGPELEEILTQLATADARFWKGPSEAPSGQA.

Alanine 2 is subject to N-acetylalanine. A Zn(2+)-binding site is contributed by histidine 450. Residue glutamate 451 is part of the active site. Zn(2+) contacts are provided by histidine 455 and glutamate 508.

This sequence belongs to the peptidase M49 family. Zn(2+) serves as cofactor. In terms of tissue distribution, detected in placenta (at protein level). Detected in erythrocytes (at protein level).

The protein localises to the cytoplasm. It localises to the cytosol. The enzyme catalyses Release of an N-terminal dipeptide from a peptide comprising four or more residues, with broad specificity. Also acts on dipeptidyl 2-naphthylamides.. With respect to regulation, activated by Co(2+). Inhibited by EDTA and o-phenanthroline (in vitro). Cleaves and degrades bioactive peptides, including angiotensin, Leu-enkephalin and Met-enkephalin. Also cleaves Arg-Arg-beta-naphthylamide (in vitro). The chain is Dipeptidyl peptidase 3 (DPP3) from Homo sapiens (Human).